Here is a 488-residue protein sequence, read N- to C-terminus: Nitrogen metabolite repression protein nmr (488 aa).

The disordered stretch occupies residues 1–45 (MPAEILSELPLRPAPRDIKIPNAMHNEERRHKHSRSSYSEMSPLM). The segment covering 14–29 (APRDIKIPNAMHNEER) has biased composition (basic and acidic residues). The segment covering 36 to 45 (SSYSEMSPLM) has biased composition (polar residues). NADP(+)-binding positions include 71 to 76 (NAAGRQ), Asn-165, Lys-215, and 237 to 240 (YNNN). NAD(+)-binding positions include 75-76 (RQ), 165-167 (NTT), Lys-215, and 237-240 (YNNN). Positions 412-488 (EEYDGGGGNN…NKRADEEWLA (77 aa)) are dispensable for NMR function. Positions 422–488 (IGNNHNNHHQ…NKRADEEWLA (67 aa)) are disordered. Positions 438 to 459 (HQNGHQNGHNGINGHIVNGGVD) are enriched in low complexity. Residues 460 to 473 (SESEEEDSDSDDEG) show a composition bias toward acidic residues.

Belongs to the NmrA-type oxidoreductase family. Interacts with nit-2.

It localises to the nucleus. Its function is as follows. May be a redox sensor protein. Negative transcriptional regulator involved in the post-transcriptional modulation of the GATA-type transcription factor nit-2, forming part of a system controlling nitrogen metabolite repression. The protein is Nitrogen metabolite repression protein nmr (nmr) of Neurospora crassa (strain ATCC 24698 / 74-OR23-1A / CBS 708.71 / DSM 1257 / FGSC 987).